We begin with the raw amino-acid sequence, 306 residues long: MANPLYHKHIISINDLSRDDLELVLATAAGLKANPQPELLKHKVIASCFFEASTRTRLSFETSMHRLGASVVGFADGSNTSLGKKGETLADTISVISTYVDAIVMRHPQEGARMASEFSGNVPVLNAGDGNQHPTQTLLDLFTIQETQGRLSNLSIAMVGDLKYGRTVHSLTQALAKFEGNRFYFIAPDALAMPAYILKMLEEKGIEYSSHGSIEEVVPELDILYMTRVQKERLDPSEYANVKAQFVLAADLAGAANLKVLHPLPRIDEIATDVDKTPHAYYFQQAGNGIFARSALALVVNADLAL.

2 residues coordinate carbamoyl phosphate: Arg55 and Thr56. Residue Lys85 coordinates L-aspartate. The carbamoyl phosphate site is built by Arg106, His133, and Gln136. L-aspartate contacts are provided by Arg166 and Arg228. Carbamoyl phosphate-binding residues include Leu264 and Pro265.

It belongs to the aspartate/ornithine carbamoyltransferase superfamily. ATCase family. As to quaternary structure, heterododecamer (2C3:3R2) of six catalytic PyrB chains organized as two trimers (C3), and six regulatory PyrI chains organized as three dimers (R2).

It catalyses the reaction carbamoyl phosphate + L-aspartate = N-carbamoyl-L-aspartate + phosphate + H(+). The protein operates within pyrimidine metabolism; UMP biosynthesis via de novo pathway; (S)-dihydroorotate from bicarbonate: step 2/3. In terms of biological role, catalyzes the condensation of carbamoyl phosphate and aspartate to form carbamoyl aspartate and inorganic phosphate, the committed step in the de novo pyrimidine nucleotide biosynthesis pathway. This is Aspartate carbamoyltransferase catalytic subunit from Serratia marcescens.